Reading from the N-terminus, the 200-residue chain is Putative HMP/thiamine-binding protein YkoF (200 aa).

Leu17 and Thr49 together coordinate thiamine.

In terms of assembly, homodimer in vitro. In vivo, may be a part of an ABC transporter complex which is composed of two ATP-binding proteins (YkoD), two transmembrane proteins (YkoC and YkoE) and a solute-binding protein (YkoF).

In terms of biological role, part of the ABC transporter complex YkoCDEF that could transport hydroxymethylpyrimidine (HMP) and/or thiamine. Could also transport other HMP-containing products. Binds thiamine via its HMP moiety. The chain is Putative HMP/thiamine-binding protein YkoF (ykoF) from Bacillus subtilis (strain 168).